A 207-amino-acid polypeptide reads, in one-letter code: Outer-membrane lipoprotein LolB (207 aa).

The N-terminal stretch at methionine 1–serine 26 is a signal peptide. Cysteine 27 is lipidated: N-palmitoyl cysteine. Cysteine 27 is lipidated: S-diacylglycerol cysteine.

Belongs to the LolB family. As to quaternary structure, monomer.

Its subcellular location is the cell outer membrane. In terms of biological role, plays a critical role in the incorporation of lipoproteins in the outer membrane after they are released by the LolA protein. This chain is Outer-membrane lipoprotein LolB, found in Francisella tularensis subsp. tularensis (strain FSC 198).